The following is a 426-amino-acid chain: MTAIVDIIGREILDSRGNPTVEVDVVLEDGAMGRAAVPSGASTGAYEAVELRDGDNSRYHGKGVRKAVDAVNGEIFDAIGGMDAEQQAQIDETLIELDGTANKGRLGANAILGVSLALARAAADSLDIPLYRYVGGVTARTLPVPMMNIVNGGVHADNPIDFQEFMIMPVGVQTFSDALRCGSEIFHTLRSELKKAGHNTNVGDEGGFAPDLPSAGAALDFIMGAIVKAGYRPGDDVALALDPASTEFFKDGKYVYGGEGKTRSIEEQAQYLAKLASDYPIVSIEDGMAEDDFEGWKLVTDMIGKTCQLVGDDLFVTNVTRLADGIRNGRANSILIKVNQIGTLTETLAAVEMAYKAGYTAVMSHRSGETEDSTIADLAVATNCGQIKTGSLSRSDRAAKYNQLLRIEQQLGAQAKYAGRAALKAV.

A (2R)-2-phosphoglycerate-binding site is contributed by Q163. Residue E205 is the Proton donor of the active site. Mg(2+)-binding residues include D242, E285, and D312. Residues K337, R366, S367, and K388 each coordinate (2R)-2-phosphoglycerate. The Proton acceptor role is filled by K337.

This sequence belongs to the enolase family. The cofactor is Mg(2+).

Its subcellular location is the cytoplasm. It localises to the secreted. The protein localises to the cell surface. It catalyses the reaction (2R)-2-phosphoglycerate = phosphoenolpyruvate + H2O. It participates in carbohydrate degradation; glycolysis; pyruvate from D-glyceraldehyde 3-phosphate: step 4/5. Functionally, catalyzes the reversible conversion of 2-phosphoglycerate (2-PG) into phosphoenolpyruvate (PEP). It is essential for the degradation of carbohydrates via glycolysis. The protein is Enolase of Nitrobacter winogradskyi (strain ATCC 25391 / DSM 10237 / CIP 104748 / NCIMB 11846 / Nb-255).